The sequence spans 491 residues: Cytosol aminopeptidase (491 aa).

The Mn(2+) site is built by Lys263 and Asp268. Lys275 is an active-site residue. Mn(2+)-binding residues include Asp286, Asp345, and Glu347. Arg349 is an active-site residue.

This sequence belongs to the peptidase M17 family. Requires Mn(2+) as cofactor.

The protein resides in the cytoplasm. It catalyses the reaction Release of an N-terminal amino acid, Xaa-|-Yaa-, in which Xaa is preferably Leu, but may be other amino acids including Pro although not Arg or Lys, and Yaa may be Pro. Amino acid amides and methyl esters are also readily hydrolyzed, but rates on arylamides are exceedingly low.. It carries out the reaction Release of an N-terminal amino acid, preferentially leucine, but not glutamic or aspartic acids.. Functionally, presumably involved in the processing and regular turnover of intracellular proteins. Catalyzes the removal of unsubstituted N-terminal amino acids from various peptides. The polypeptide is Cytosol aminopeptidase (pepA) (Haemophilus influenzae (strain ATCC 51907 / DSM 11121 / KW20 / Rd)).